We begin with the raw amino-acid sequence, 343 residues long: Phosphate acyltransferase (343 aa).

The protein belongs to the PlsX family. Homodimer. Probably interacts with PlsY.

Its subcellular location is the cytoplasm. It catalyses the reaction a fatty acyl-[ACP] + phosphate = an acyl phosphate + holo-[ACP]. It functions in the pathway lipid metabolism; phospholipid metabolism. Its function is as follows. Catalyzes the reversible formation of acyl-phosphate (acyl-PO(4)) from acyl-[acyl-carrier-protein] (acyl-ACP). This enzyme utilizes acyl-ACP as fatty acyl donor, but not acyl-CoA. The protein is Phosphate acyltransferase of Coxiella burnetii (strain RSA 331 / Henzerling II).